We begin with the raw amino-acid sequence, 392 residues long: Arogenate dehydratase/prephenate dehydratase 1, chloroplastic (392 aa).

Residues 1-48 (MALRCFPIWVCPQTTHHRSPLMGLAEFDADKRRRFCLWECSSSASQRA) constitute a chloroplast transit peptide. The Prephenate dehydratase domain maps to 107 to 282 (RISFQGIPGA…NVTRFLILAR (176 aa)). Residues 296 to 387 (SIVFSLEEGP…SFIRILGCYP (92 aa)) enclose the ACT domain.

In terms of tissue distribution, expressed in roots, leaves, stems, flowers and siliques.

It localises to the plastid. It is found in the chloroplast stroma. It carries out the reaction L-arogenate + H(+) = L-phenylalanine + CO2 + H2O. It catalyses the reaction prephenate + H(+) = 3-phenylpyruvate + CO2 + H2O. It participates in amino-acid biosynthesis; L-phenylalanine biosynthesis; L-phenylalanine from L-arogenate: step 1/1. The protein operates within amino-acid biosynthesis; L-phenylalanine biosynthesis; phenylpyruvate from prephenate: step 1/1. Converts the prephenate produced from the shikimate-chorismate pathway into phenylalanine. Dehydratase that uses arogenate and prephenate as substrates. Utilzes more efficiently arogenate than prephenate. This chain is Arogenate dehydratase/prephenate dehydratase 1, chloroplastic, found in Arabidopsis thaliana (Mouse-ear cress).